The chain runs to 240 residues: BLOC-1-related complex subunit 8 homolog (240 aa).

Disordered regions lie at residues 1–33 and 163–240; these read MSSILKSSTGSNHSSTSNHSSINNISQLSGSHG and KTFS…EKIN. Low complexity-rich tracts occupy residues 7–26 and 163–179; these read SSTGSNHSSTSNHSSINNIS and KTFSSFQQQHKIYQQQQ. The segment covering 180–190 has biased composition (polar residues); that stretch reads TNLTPSKPTLS. The span at 196-205 shows a compositional bias: low complexity; sequence DNNNNNNNLN. Positions 208-240 are enriched in basic and acidic residues; that stretch reads EKIEKEEKIEKEDEGKEKDEKEKDDKDLNEKIN. Residues 211 to 239 adopt a coiled-coil conformation; it reads EKEEKIEKEDEGKEKDEKEKDDKDLNEKI.

This sequence belongs to the BORCS8 family.

Its subcellular location is the lysosome membrane. May participate in the coupling of lysosomes to microtubule plus-end-directed kinesin motor. This Dictyostelium discoideum (Social amoeba) protein is BLOC-1-related complex subunit 8 homolog.